The following is a 328-amino-acid chain: N-acetyl-gamma-glutamyl-phosphate reductase (328 aa).

Cys-143 is a catalytic residue.

The protein belongs to the NAGSA dehydrogenase family. Type 1 subfamily.

The protein resides in the cytoplasm. The enzyme catalyses N-acetyl-L-glutamate 5-semialdehyde + phosphate + NADP(+) = N-acetyl-L-glutamyl 5-phosphate + NADPH + H(+). The protein operates within amino-acid biosynthesis; L-arginine biosynthesis; N(2)-acetyl-L-ornithine from L-glutamate: step 3/4. Functionally, catalyzes the NADPH-dependent reduction of N-acetyl-5-glutamyl phosphate to yield N-acetyl-L-glutamate 5-semialdehyde. This is N-acetyl-gamma-glutamyl-phosphate reductase from Methanosphaerula palustris (strain ATCC BAA-1556 / DSM 19958 / E1-9c).